Here is an 86-residue protein sequence, read N- to C-terminus: Exodeoxyribonuclease 7 small subunit (86 aa).

Belongs to the XseB family. Heterooligomer composed of large and small subunits.

It localises to the cytoplasm. The catalysed reaction is Exonucleolytic cleavage in either 5'- to 3'- or 3'- to 5'-direction to yield nucleoside 5'-phosphates.. Bidirectionally degrades single-stranded DNA into large acid-insoluble oligonucleotides, which are then degraded further into small acid-soluble oligonucleotides. This Xanthomonas axonopodis pv. citri (strain 306) protein is Exodeoxyribonuclease 7 small subunit.